We begin with the raw amino-acid sequence, 102 residues long: Small ribosomal subunit protein uS10 (102 aa).

This sequence belongs to the universal ribosomal protein uS10 family. In terms of assembly, part of the 30S ribosomal subunit.

In terms of biological role, involved in the binding of tRNA to the ribosomes. The chain is Small ribosomal subunit protein uS10 from Pyrococcus horikoshii (strain ATCC 700860 / DSM 12428 / JCM 9974 / NBRC 100139 / OT-3).